A 69-amino-acid polypeptide reads, in one-letter code: Rubredoxin-1 (69 aa).

The 56-residue stretch at 14-69 (QASWMCAECGYIYDPAEGNLETNIRPGMPFDKLPDDWSCPVCNHPKNQFTKFISQL) folds into the Rubredoxin-like domain. Fe cation-binding residues include C19, C22, C52, and C55.

This sequence belongs to the rubredoxin family. As to quaternary structure, monomer. The cofactor is Fe(3+).

Functionally, serves as an electron acceptor for pyruvate ferredoxin oxidoreductase (PFOR). The polypeptide is Rubredoxin-1 (rub1) (Chlorobaculum tepidum (strain ATCC 49652 / DSM 12025 / NBRC 103806 / TLS) (Chlorobium tepidum)).